A 483-amino-acid chain; its full sequence is Probable glycosyltransferase 6 (483 aa).

At 1-40 (MAASETAPFGVSAASKGGGGVAGARAQHGQLAVAGRVHDA) the chain is on the cytoplasmic side. A helical; Signal-anchor for type II membrane protein membrane pass occupies residues 41–61 (LVFAAGAVAAVLVLLATASFL). The Lumenal portion of the chain corresponds to 62–483 (SPMPVTNLVA…PLPFDYPAAR (422 aa)). N144 carries an N-linked (GlcNAc...) asparagine glycan.

The protein belongs to the glycosyltransferase 34 family.

It is found in the golgi apparatus membrane. Probable glycosyltransferase that may be involved in the biosynthesis of xyloglucan. The protein is Probable glycosyltransferase 6 of Oryza sativa subsp. japonica (Rice).